The sequence spans 722 residues: Glycine--tRNA ligase beta subunit (722 aa).

Belongs to the class-II aminoacyl-tRNA synthetase family. In terms of assembly, tetramer of two alpha and two beta subunits.

It is found in the cytoplasm. The catalysed reaction is tRNA(Gly) + glycine + ATP = glycyl-tRNA(Gly) + AMP + diphosphate. The chain is Glycine--tRNA ligase beta subunit (glyS) from Synechocystis sp. (strain ATCC 27184 / PCC 6803 / Kazusa).